A 712-amino-acid chain; its full sequence is Polyribonucleotide nucleotidyltransferase (712 aa).

Asp-493 and Asp-499 together coordinate Mg(2+). A KH domain is found at 560 to 622; the sequence is PRLTKLTIDP…RDAEAAIERI (63 aa). The region spanning 632–700 is the S1 motif domain; the sequence is GEDYVGTVKG…DDGKMRLTRK (69 aa).

This sequence belongs to the polyribonucleotide nucleotidyltransferase family. Mg(2+) serves as cofactor.

It is found in the cytoplasm. It carries out the reaction RNA(n+1) + phosphate = RNA(n) + a ribonucleoside 5'-diphosphate. In terms of biological role, involved in mRNA degradation. Catalyzes the phosphorolysis of single-stranded polyribonucleotides processively in the 3'- to 5'-direction. In Salinibacter ruber (strain DSM 13855 / M31), this protein is Polyribonucleotide nucleotidyltransferase.